Here is a 236-residue protein sequence, read N- to C-terminus: Purine nucleoside phosphorylase DeoD-type (236 aa).

Residue His5 participates in a purine D-ribonucleoside binding. Residues Gly21, Arg25, Arg44, and 88–91 contribute to the phosphate site; that span reads RVGT. A purine D-ribonucleoside-binding positions include 180–182 and 204–205; these read EME and SD. Asp205 serves as the catalytic Proton donor.

It belongs to the PNP/UDP phosphorylase family. As to quaternary structure, homohexamer; trimer of homodimers.

It carries out the reaction a purine D-ribonucleoside + phosphate = a purine nucleobase + alpha-D-ribose 1-phosphate. It catalyses the reaction a purine 2'-deoxy-D-ribonucleoside + phosphate = a purine nucleobase + 2-deoxy-alpha-D-ribose 1-phosphate. In terms of biological role, catalyzes the reversible phosphorolytic breakdown of the N-glycosidic bond in the beta-(deoxy)ribonucleoside molecules, with the formation of the corresponding free purine bases and pentose-1-phosphate. This is Purine nucleoside phosphorylase DeoD-type from Shewanella amazonensis (strain ATCC BAA-1098 / SB2B).